The primary structure comprises 196 residues: T-cell surface glycoprotein CD3 epsilon chain (196 aa).

The signal sequence occupies residues 1–21 (MPSGNLWKVLGLCLLSVGAWG). Residues 22–116 (QEDIERPDED…VCENCVEVDL (95 aa)) lie on the Extracellular side of the membrane. Residues 28–102 (PDEDTQKTFK…VGEKTSHRLY (75 aa)) enclose the Ig-like domain. Cys49 and Cys91 form a disulfide bridge. A helical membrane pass occupies residues 117–137 (MAVVTIIVVDICITLGLLMVV). The Cytoplasmic portion of the chain corresponds to 138-196 (YYYSKSRKAKAMPVTRGAGAGGRPRGQNRERPPPVPNPDYEPIRKGQRDLYSGLNQRGR). The segment at 150-196 (PVTRGAGAGGRPRGQNRERPPPVPNPDYEPIRKGQRDLYSGLNQRGR) is disordered. The segment at 164-181 (QNRERPPPVPNPDYEPIR) is NUMB-binding region. Positions 167 to 194 (ERPPPVPNPDYEPIRKGQRDLYSGLNQR) constitute an ITAM domain. The segment at 168–175 (RPPPVPNP) is proline-rich sequence. Residues Tyr177 and Tyr188 each carry the phosphotyrosine modification.

As to quaternary structure, the TCR-CD3 complex is composed of a CD3D/CD3E and a CD3G/CD3E heterodimers that preferentially associate with TCRalpha and TCRbeta, respectively, to form TCRalpha/CD3E/CD3G and TCRbeta/CD3G/CD3E trimers. In turn, the hexamer interacts with CD3Z homodimer to form the TCR-CD3 complex. Alternatively, TCRalpha and TCRbeta can be replaced by TCRgamma and TCRdelta. Interacts with CD6. Interacts (via Proline-rich sequence) with NCK1; the interaction is ligand dependent but independent of tyrosine kinase activation. In terms of processing, phosphorylated on Tyr residues after T-cell receptor triggering by LCK in association with CD4/CD8.

The protein localises to the cell membrane. Functionally, part of the TCR-CD3 complex present on T-lymphocyte cell surface that plays an essential role in adaptive immune response. When antigen presenting cells (APCs) activate T-cell receptor (TCR), TCR-mediated signals are transmitted across the cell membrane by the CD3 chains CD3D, CD3E, CD3G and CD3Z. All CD3 chains contain immunoreceptor tyrosine-based activation motifs (ITAMs) in their cytoplasmic domain. Upon TCR engagement, these motifs become phosphorylated by Src family protein tyrosine kinases LCK and FYN, resulting in the activation of downstream signaling pathways. In addition of this role of signal transduction in T-cell activation, CD3E plays an essential role in correct T-cell development. Also participates in internalization and cell surface down-regulation of TCR-CD3 complexes via endocytosis sequences present in CD3E cytosolic region. In addition to its role as a TCR coreceptor, it serves as a receptor for ITPRIPL1. Ligand recognition inhibits T-cell activation by promoting interaction with NCK1, which prevents CD3E-ZAP70 interaction and blocks the ERK-NFkB signaling cascade and calcium influx. This Sus scrofa (Pig) protein is T-cell surface glycoprotein CD3 epsilon chain (CD3E).